The chain runs to 378 residues: MKDSKKNGFFSWLSSKIKKKKTIDIRQNNTDKNHDINHEDLYTKKDLLIKQDNPKKDEIDTLNDHGKDIEKAQNTKNNFFLRLKKSLKTTKKNLGDKIYQIFLSKKIDEVLFEELEEKMLLADIGINTTNRIISNLIKDVNREDLKNSEKLYFLLKRKMFNILKKVEIPLEISSHSPFVILVVGVNGTGKTTTVAKLAEKYKLEGKSIMLAAADTFRAAGIEQLQTLGKLNNIPVIAQRSGSDPAAVIFDAVKSAKSKKIDVLIIDTAGRLHNKLHLIEELKKIVRVIKKIDISAPHEKLLIIDSCNGQNTIQQTEIFHKALNLTGIIITKLDGTAKGGVVFSLADQFQIPIRYIGIGEKMQDLGHFNSQEFIESIFT.

Residues 184–191, 266–270, and 330–333 contribute to the GTP site; these read GVNGTGKT, DTAGR, and TKLD.

It belongs to the GTP-binding SRP family. FtsY subfamily. Part of the signal recognition particle protein translocation system, which is composed of SRP and FtsY. SRP is a ribonucleoprotein composed of Ffh and a 4.5S RNA molecule.

The protein resides in the cell membrane. The protein localises to the cytoplasm. It catalyses the reaction GTP + H2O = GDP + phosphate + H(+). In terms of biological role, involved in targeting and insertion of nascent membrane proteins into the cytoplasmic membrane. Acts as a receptor for the complex formed by the signal recognition particle (SRP) and the ribosome-nascent chain (RNC). Interaction with SRP-RNC leads to the transfer of the RNC complex to the Sec translocase for insertion into the membrane, the hydrolysis of GTP by both Ffh and FtsY, and the dissociation of the SRP-FtsY complex into the individual components. The chain is Signal recognition particle receptor FtsY from Buchnera aphidicola subsp. Acyrthosiphon pisum (strain APS) (Acyrthosiphon pisum symbiotic bacterium).